The following is a 122-amino-acid chain: Ribosome-binding factor A (122 aa).

It belongs to the RbfA family. Monomer. Binds 30S ribosomal subunits, but not 50S ribosomal subunits or 70S ribosomes.

The protein localises to the cytoplasm. Functionally, one of several proteins that assist in the late maturation steps of the functional core of the 30S ribosomal subunit. Associates with free 30S ribosomal subunits (but not with 30S subunits that are part of 70S ribosomes or polysomes). Required for efficient processing of 16S rRNA. May interact with the 5'-terminal helix region of 16S rRNA. The protein is Ribosome-binding factor A of Anaeromyxobacter sp. (strain Fw109-5).